A 108-amino-acid chain; its full sequence is Movement protein TGB2 (108 aa).

At 1 to 8 the chain is on the cytoplasmic side; it reads MPLTPPPN. The helical transmembrane segment at 9–29 threads the bilayer; that stretch reads YTGLYIAAALGVSLAAVVALF. At 30–72 the chain is on the lumenal side; it reads TRSTLPIVGDSQHNLPHGGRYRDGTKAIDYFKPTKLNSVEPGN. The helical transmembrane segment at 73-93 threads the bilayer; it reads YWYTQPWLLVILLVALICLSG. Residues 94–108 are Cytoplasmic-facing; sequence RHAQCCPRCNRVHSA.

The protein belongs to the Tymovirales TGBp2 protein family.

The protein resides in the host endoplasmic reticulum membrane. Its function is as follows. Plays a role in viral cell-to-cell propagation, by facilitating genome transport to neighboring plant cells through plasmosdesmata,. The polypeptide is Movement protein TGB2 (Solanum tuberosum (Potato)).